Consider the following 196-residue polypeptide: Molybdopterin synthase catalytic subunit (196 aa).

The disordered stretch occupies residues 1–29 (MSTLPSTDPPPLPASTSSQQPAVHIPPPS). Substrate is bound by residues 145–146 (HR), Lys-161, and 168–170 (KRE). The interval 174 to 196 (GEPPGQGEWRANRDTDPEGKSTS) is disordered. Basic and acidic residues predominate over residues 183–196 (RANRDTDPEGKSTS).

This sequence belongs to the MoaE family. MOCS2B subfamily. Heterotetramer; composed of 2 small (MOCS2A) and 2 large (MOCS2B) subunits.

It localises to the cytoplasm. The catalysed reaction is 2 [molybdopterin-synthase sulfur-carrier protein]-C-terminal-Gly-aminoethanethioate + cyclic pyranopterin phosphate + H2O = molybdopterin + 2 [molybdopterin-synthase sulfur-carrier protein]-C-terminal Gly-Gly + 2 H(+). Its pathway is cofactor biosynthesis; molybdopterin biosynthesis. Functionally, catalytic subunit of the molybdopterin synthase complex, a complex that catalyzes the conversion of precursor Z into molybdopterin. Acts by mediating the incorporation of 2 sulfur atoms from thiocarboxylated MOCS2A into precursor Z to generate a dithiolene group. This Coccidioides immitis (strain RS) (Valley fever fungus) protein is Molybdopterin synthase catalytic subunit.